Here is a 693-residue protein sequence, read N- to C-terminus: Oxysterol-binding protein-related protein 2B (693 aa).

Over residues 1-15 (MPLTRSKSLPATENG) the composition is skewed to polar residues. A disordered region spans residues 1–22 (MPLTRSKSLPATENGGSDRETL). Residues 25–154 (GRSVAGILYK…WLQALASTRG (130 aa)) form the PH domain. Positions 207–239 (EVQEQIKLLHEERKKLLDALRQLEMANLEAEAS) form a coiled coil. Disordered regions lie at residues 256–298 (LGRG…GEPD) and 600–639 (EKLPPTDSRLRPDQRHLENGEYEKANEEKQRLERRQRMSR). A compositionally biased stretch (acidic residues) spans 274 to 284 (QEFEDISEEDE). Basic and acidic residues-rich tracts occupy residues 285–294 (ASFHDTKESF) and 600–635 (EKLPPTDSRLRPDQRHLENGEYEKANEEKQRLERRQ). Residues 612–643 (DQRHLENGEYEKANEEKQRLERRQRMSRQIQE) adopt a coiled-coil conformation.

Belongs to the OSBP family. As to expression, expressed in roots, leaves, stems and flowers.

Functionally, may be involved in the transport of sterols. The chain is Oxysterol-binding protein-related protein 2B (ORP2B) from Arabidopsis thaliana (Mouse-ear cress).